The chain runs to 1362 residues: ATP-dependent RNA helicase dhx29 (1362 aa).

Residues 1 to 10 (MGGKNKKNRH) show a composition bias toward basic residues. Residues 1–76 (MGGKNKKNRH…FASSSDSGVS (76 aa)) are disordered. Over residues 18–27 (GATAAANRPR) the composition is skewed to low complexity. Residues 28 to 41 (AAAEPRPGGEDAAK) are compositionally biased toward basic and acidic residues. Over residues 66–76 (SFASSSDSGVS) the composition is skewed to low complexity. A coiled-coil region spans residues 89–109 (EAKLEKRIISLINEHKKLNSN). Disordered regions lie at residues 182–215 (QRARAKFQAPPQRPSAANESATEKGEEGASLKGN) and 229–257 (EQGSDDDDDDDDVKEEEKETTLEKFDPNE). The span at 231-242 (GSDDDDDDDDVK) shows a compositional bias: acidic residues. A compositionally biased stretch (basic and acidic residues) spans 243-257 (EEEKETTLEKFDPNE). Residues 285–305 (QKEAQERIRGYQQEMKSLEDH) adopt a coiled-coil conformation. Residues 317–336 (VKSESKQPKPALPPSEDEPL) form a disordered region. The 174-residue stretch at 576–749 (LETLKRHRVI…FTHCPIIRIS (174 aa)) folds into the Helicase ATP-binding domain. 589 to 596 (GETGSGKS) contributes to the ATP binding site. A DEAH box motif is present at residues 696-699 (DEVH). Residues 852–1021 (DISPEYRNVE…ELCLHIMKCD (170 aa)) form the Helicase C-terminal domain.

It belongs to the DEAD box helicase family. DEAH subfamily. In terms of assembly, part of the 43S pre-initiation complex (PIC).

It localises to the cytoplasm. The catalysed reaction is ATP + H2O = ADP + phosphate + H(+). Functionally, ATP-binding RNA helicase involved in translation initiation. Part of the 43S pre-initiation complex that is required for efficient initiation on mRNAs of higher eukaryotes with structured 5'-UTRs by promoting efficient NTPase-dependent 48S complex formation. Specifically binds to the 40S ribosome near the mRNA entrance. Does not possess a processive helicase activity. This is ATP-dependent RNA helicase dhx29 from Xenopus laevis (African clawed frog).